Here is a 1145-residue protein sequence, read N- to C-terminus: DNA-directed RNA polymerase subunit beta (1145 aa).

A compositionally biased stretch (basic and acidic residues) spans 1101–1112 (LPEERRVSSSKE). Residues 1101–1145 (LPEERRVSSSKEEIEEEEEVEDNSDEFDETFLEEAEDDFSLDDED) form a disordered region. Residues 1113-1145 (EIEEEEEVEDNSDEFDETFLEEAEDDFSLDDED) are compositionally biased toward acidic residues.

This sequence belongs to the RNA polymerase beta chain family. As to quaternary structure, the RNAP catalytic core consists of 2 alpha, 1 beta, 1 beta' and 1 omega subunit. When a sigma factor is associated with the core the holoenzyme is formed, which can initiate transcription.

It carries out the reaction RNA(n) + a ribonucleoside 5'-triphosphate = RNA(n+1) + diphosphate. Its function is as follows. DNA-dependent RNA polymerase catalyzes the transcription of DNA into RNA using the four ribonucleoside triphosphates as substrates. This chain is DNA-directed RNA polymerase subunit beta, found in Desulforamulus reducens (strain ATCC BAA-1160 / DSM 100696 / MI-1) (Desulfotomaculum reducens).